Reading from the N-terminus, the 229-residue chain is Zinc finger matrin-type protein 4 (229 aa).

4 Matrin-type zinc fingers span residues 14–44, 72–106, 145–175, and 198–228; these read SYCK…KVRL, DKNK…LKLL, RYCG…NAAR, and YRCT…NLKN.

It localises to the nucleus. The chain is Zinc finger matrin-type protein 4 (Zmat4) from Mus musculus (Mouse).